The sequence spans 25 residues: Small ribosomal subunit protein eS32 (25 aa).

The interval 1–25 (MREKWKKKRSRRLRRKRRKMRARSK) is disordered.

This sequence belongs to the eukaryotic ribosomal protein eS32 family. Component of the large ribosomal subunit.

The chain is Small ribosomal subunit protein eS32 (rpl41) from Agaricus bisporus (White button mushroom).